The following is a 378-amino-acid chain: MNQADRALQASQARVYNFSAGPAVLPTEVLEQAREEMLSWQGSGMSVMEMSHRGREFESIMAQAFADLRELLAVPDNYEILFLQGGAIAENAIVPLNLMRRLSLDAPKADYVVTGTWSVKSQQEARKYGEVNIAASSEAERFHRIPDVSAWKLSDDAAYVHLCTNETIVGVEYQETPDIGQAHGRVVVADVSSHILSRPVDWNGYAVLYGGAQKNIGPAGLTIVIARKDLLGHAHPLCPSAFNWRLVAENGSMYNTPPTYAIYVAGLVFQWIKRQGGVEALETRNIVKAKMLYDFIDASGFYRNDIHPSCRSRMNVPFFLNDESRNEAFLAQARAQGLVQLKGHKSVGGMRASIYNAMPLEGVEALVDFMREFERTAA.

Arg53 provides a ligand contact to L-glutamate. Trp117, Thr167, Asp190, and Gln213 together coordinate pyridoxal 5'-phosphate. N6-(pyridoxal phosphate)lysine is present on Lys214. 255 to 256 (NT) is a binding site for pyridoxal 5'-phosphate.

The protein belongs to the class-V pyridoxal-phosphate-dependent aminotransferase family. SerC subfamily. In terms of assembly, homodimer. Pyridoxal 5'-phosphate is required as a cofactor.

It is found in the cytoplasm. It carries out the reaction O-phospho-L-serine + 2-oxoglutarate = 3-phosphooxypyruvate + L-glutamate. It catalyses the reaction 4-(phosphooxy)-L-threonine + 2-oxoglutarate = (R)-3-hydroxy-2-oxo-4-phosphooxybutanoate + L-glutamate. Its pathway is amino-acid biosynthesis; L-serine biosynthesis; L-serine from 3-phospho-D-glycerate: step 2/3. It functions in the pathway cofactor biosynthesis; pyridoxine 5'-phosphate biosynthesis; pyridoxine 5'-phosphate from D-erythrose 4-phosphate: step 3/5. Functionally, catalyzes the reversible conversion of 3-phosphohydroxypyruvate to phosphoserine and of 3-hydroxy-2-oxo-4-phosphonooxybutanoate to phosphohydroxythreonine. This is Phosphoserine aminotransferase from Ralstonia nicotianae (strain ATCC BAA-1114 / GMI1000) (Ralstonia solanacearum).